The primary structure comprises 277 residues: Elongation factor Ts (277 aa).

The involved in Mg(2+) ion dislocation from EF-Tu stretch occupies residues 81-84; that stretch reads TDFV.

Belongs to the EF-Ts family.

It localises to the cytoplasm. Functionally, associates with the EF-Tu.GDP complex and induces the exchange of GDP to GTP. It remains bound to the aminoacyl-tRNA.EF-Tu.GTP complex up to the GTP hydrolysis stage on the ribosome. The sequence is that of Elongation factor Ts from Amoebophilus asiaticus (strain 5a2).